The sequence spans 378 residues: Beta sliding clamp (378 aa).

This sequence belongs to the beta sliding clamp family. As to quaternary structure, forms a ring-shaped head-to-tail homodimer around DNA which binds and tethers DNA polymerases and other proteins to the DNA. The DNA replisome complex has a single clamp-loading complex (3 tau and 1 each of delta, delta', psi and chi subunits) which binds 3 Pol III cores (1 core on the leading strand and 2 on the lagging strand) each with a beta sliding clamp dimer. Additional proteins in the replisome are other copies of gamma, psi and chi, Ssb, DNA helicase and RNA primase. Interacts with YabA, and via YabA, with DnaA. During sporulation probably interacts with SirA.

It is found in the cytoplasm. The protein resides in the nucleoid. In terms of biological role, confers DNA tethering and processivity to DNA polymerases and other proteins. Acts as a clamp, forming a ring around DNA (a reaction catalyzed by the clamp-loading complex) which diffuses in an ATP-independent manner freely and bidirectionally along dsDNA. Initially characterized for its ability to contact the catalytic subunit of DNA polymerase III (Pol III), a complex, multichain enzyme responsible for most of the replicative synthesis in bacteria; Pol III exhibits 3'-5' exonuclease proofreading activity. The beta chain is required for initiation of replication as well as for processivity of DNA replication. Overexpression in vivo stimulates inititation of DNA replication from oriC. Increased levels of DnaN remove YabA from its association with DnaA on the chromosome, allowing DnaA to bind to its targets. Its interaction with DnaA probably serves as a sink to prevent excessive replication initiation. The polypeptide is Beta sliding clamp (Bacillus subtilis (strain 168)).